The following is a 175-amino-acid chain: Small ribosomal subunit protein uS7 (175 aa).

The protein belongs to the universal ribosomal protein uS7 family. In terms of assembly, part of the 30S ribosomal subunit. Contacts proteins S9 and S11.

Functionally, one of the primary rRNA binding proteins, it binds directly to 16S rRNA where it nucleates assembly of the head domain of the 30S subunit. Is located at the subunit interface close to the decoding center, probably blocks exit of the E-site tRNA. The sequence is that of Small ribosomal subunit protein uS7 from Legionella pneumophila (strain Paris).